The following is a 277-amino-acid chain: Release factor glutamine methyltransferase (277 aa).

S-adenosyl-L-methionine-binding positions include 117-121 (GTGTG), aspartate 140, tryptophan 168, and asparagine 183. A substrate-binding site is contributed by 183–186 (NPPY).

Belongs to the protein N5-glutamine methyltransferase family. PrmC subfamily.

The enzyme catalyses L-glutaminyl-[peptide chain release factor] + S-adenosyl-L-methionine = N(5)-methyl-L-glutaminyl-[peptide chain release factor] + S-adenosyl-L-homocysteine + H(+). In terms of biological role, methylates the class 1 translation termination release factors RF1/PrfA and RF2/PrfB on the glutamine residue of the universally conserved GGQ motif. This is Release factor glutamine methyltransferase from Salmonella typhimurium (strain LT2 / SGSC1412 / ATCC 700720).